Reading from the N-terminus, the 207-residue chain is Proteasome subunit beta 1 (207 aa).

A propeptide spans 1–9 (MWALDKIKG) (removed in mature form; by autocatalysis). Catalysis depends on Thr-10, which acts as the Nucleophile.

The protein belongs to the peptidase T1B family. As to quaternary structure, the 20S proteasome core is composed of 14 alpha and 14 beta subunits that assemble into four stacked heptameric rings, resulting in a barrel-shaped structure. The two inner rings, each composed of seven catalytic beta subunits, are sandwiched by two outer rings, each composed of seven alpha subunits. The catalytic chamber with the active sites is on the inside of the barrel. Has a gated structure, the ends of the cylinder being occluded by the N-termini of the alpha-subunits. Is capped at one or both ends by the proteasome regulatory ATPase, PAN.

The protein localises to the cytoplasm. It catalyses the reaction Cleavage of peptide bonds with very broad specificity.. Its activity is regulated as follows. The formation of the proteasomal ATPase PAN-20S proteasome complex, via the docking of the C-termini of PAN into the intersubunit pockets in the alpha-rings, triggers opening of the gate for substrate entry. Interconversion between the open-gate and close-gate conformations leads to a dynamic regulation of the 20S proteasome proteolysis activity. Its function is as follows. Component of the proteasome core, a large protease complex with broad specificity involved in protein degradation. The protein is Proteasome subunit beta 1 of Thermococcus sibiricus (strain DSM 12597 / MM 739).